The chain runs to 423 residues: Glucose-1-phosphate adenylyltransferase (423 aa).

Alpha-D-glucose 1-phosphate-binding positions include Tyr112, Gly177, 192 to 193 (EK), and Ser210.

Belongs to the bacterial/plant glucose-1-phosphate adenylyltransferase family. As to quaternary structure, homotetramer.

It catalyses the reaction alpha-D-glucose 1-phosphate + ATP + H(+) = ADP-alpha-D-glucose + diphosphate. It functions in the pathway glycan biosynthesis; glycogen biosynthesis. Functionally, involved in the biosynthesis of ADP-glucose, a building block required for the elongation reactions to produce glycogen. Catalyzes the reaction between ATP and alpha-D-glucose 1-phosphate (G1P) to produce pyrophosphate and ADP-Glc. The sequence is that of Glucose-1-phosphate adenylyltransferase from Rhodospirillum rubrum (strain ATCC 11170 / ATH 1.1.1 / DSM 467 / LMG 4362 / NCIMB 8255 / S1).